The chain runs to 395 residues: Cation channel sperm-associated protein 3 (395 aa).

The Cytoplasmic portion of the chain corresponds to 1–48 (MSQHFHHNPVRVKSGSLFATASEALQARLSKIKRKDKECQAYFRKVIK). Residues 49 to 71 (STFFQIVMITTVTTNSFLLVLGT) form a helical membrane-spanning segment. Residues 72–80 (NYDIQFEFF) are Extracellular-facing. A helical membrane pass occupies residues 81–107 (RTFEVSELFFVSVYVCEFLMKVYVDPI). A topological domain (cytoplasmic) is located at residue Thr108. The helical transmembrane segment at 109 to 131 (YWKDGYNILDVIILIILTIPYLL) threads the bilayer. The Extracellular segment spans residues 132 to 143 (RKIKGNHSAYLH). The chain crosses the membrane as a helical span at residues 144–160 (FADGIQSLRILKLISYS). Over 161 to 168 (RGIRTLII) the chain is Cytoplasmic. The chain crosses the membrane as a helical span at residues 169 to 195 (AVGETVYTVASVLTLLFLLMFVFAILG). Residues 196–216 (FCLFGVTDRGDLENWGNLASA) are Extracellular-facing. Positions 217-236 (FFTLFSLATVDGWTDLQEEL) form an intramembrane region, helical; Pore-forming. The Extracellular segment spans residues 237–242 (DKRKFT). The chain crosses the membrane as a helical span at residues 243–268 (VSRAFTILFILLASFIFLNMFVGVMI). Residues 269-395 (MHTEDSMKKF…ESSSSLSGLS (127 aa)) are Cytoplasmic-facing.

Belongs to the cation channel sperm-associated (TC 1.A.1.19) family. As to quaternary structure, component of the CatSper complex or CatSpermasome composed of the core pore-forming members CATSPER1, CATSPER2, CATSPER3 and CATSPER4 as well as auxiliary members CATSPERB, CATSPERG2, CATSPERD, CATSPERE, CATSPERZ, C2CD6/CATSPERT, SLCO6C1, TMEM249, TMEM262 and EFCAB9. HSPA1 may be an additional auxiliary complex member. The core complex members CATSPER1, CATSPER2, CATSPER3 and CATSPER4 form a heterotetrameric channel. The auxiliary CATSPERB, CATSPERG2, CATSPERD and CATSPERE subunits form a pavilion-like structure over the pore which stabilizes the complex through interactions with CATSPER4, CATSPER3, CATSPER1 and CATSPER2 respectively. SLCO6C1 interacts with CATSPERE and TMEM262/CATSPERH interacts with CATSPERB, further stabilizing the complex. C2CD6/CATSPERT interacts at least with CATSPERD and is required for targeting the CatSper complex in the flagellar membrane. As to expression, testis-specific.

It is found in the cell projection. The protein localises to the cilium. It localises to the flagellum membrane. The catalysed reaction is Ca(2+)(in) = Ca(2+)(out). Its activity is regulated as follows. In contrast to the human ortholog, not activated by progesterone. Activated by intracellular alkalinization. Pore-forming subunit of the CatSper complex, a sperm-specific voltage-gated calcium channel that plays a central role in sperm cell hyperactivation. Controls calcium entry to mediate the hyperactivated motility, a step needed for sperm motility which is essential late in the preparation of sperm for fertilization. This Mus musculus (Mouse) protein is Cation channel sperm-associated protein 3 (Catsper3).